The sequence spans 455 residues: tRNA-2-methylthio-N(6)-dimethylallyladenosine synthase (455 aa).

The 116-residue stretch at 18 to 133 (KKLFIETYGC…LPELIAAVEA (116 aa)) folds into the MTTase N-terminal domain. [4Fe-4S] cluster-binding residues include Cys27, Cys63, Cys97, Cys171, Cys175, and Cys178. The 234-residue stretch at 157–390 (CGNHISGFVS…IALQNRLSAE (234 aa)) folds into the Radical SAM core domain. The TRAM domain maps to 393-455 (QRCIGKTYEV…SSATLKGEEV (63 aa)).

It belongs to the methylthiotransferase family. MiaB subfamily. In terms of assembly, monomer. It depends on [4Fe-4S] cluster as a cofactor.

It is found in the cytoplasm. The catalysed reaction is N(6)-dimethylallyladenosine(37) in tRNA + (sulfur carrier)-SH + AH2 + 2 S-adenosyl-L-methionine = 2-methylsulfanyl-N(6)-dimethylallyladenosine(37) in tRNA + (sulfur carrier)-H + 5'-deoxyadenosine + L-methionine + A + S-adenosyl-L-homocysteine + 2 H(+). Catalyzes the methylthiolation of N6-(dimethylallyl)adenosine (i(6)A), leading to the formation of 2-methylthio-N6-(dimethylallyl)adenosine (ms(2)i(6)A) at position 37 in tRNAs that read codons beginning with uridine. This Bacteroides thetaiotaomicron (strain ATCC 29148 / DSM 2079 / JCM 5827 / CCUG 10774 / NCTC 10582 / VPI-5482 / E50) protein is tRNA-2-methylthio-N(6)-dimethylallyladenosine synthase.